A 144-amino-acid polypeptide reads, in one-letter code: Putative 2'-deoxynucleoside 5'-phosphate N-hydrolase 1 (144 aa).

Residues 7–13 (YFCGSIR), tyrosine 22, histidine 39, glutamate 83, and 107–109 (SGM) each bind substrate.

The protein belongs to the 2'-deoxynucleoside 5'-phosphate N-hydrolase 1 family. Monomer and homodimer.

It localises to the cytoplasm. Its subcellular location is the nucleus. It catalyses the reaction a pyrimidine 2'-deoxyribonucleoside 5'-phosphate + H2O = a pyrimidine nucleobase + 2-deoxy-D-ribose 5-phosphate. It carries out the reaction a purine 2'-deoxyribonucleoside 5'-phosphate + H2O = a purine nucleobase + 2-deoxy-D-ribose 5-phosphate. Catalyzes the cleavage of the N-glycosidic bond of deoxyribonucleoside 5'-monophosphates to yield deoxyribose 5-phosphate and a purine or pyrimidine base. The protein is Putative 2'-deoxynucleoside 5'-phosphate N-hydrolase 1 of Trichoplax adhaerens (Trichoplax reptans).